Here is an 86-residue protein sequence, read N- to C-terminus: Omega-theraphotoxin-Hhn1f 3 (86 aa).

An N-terminal signal peptide occupies residues 1 to 21 (MKSIVFVALFGLALLAVACSA). The propeptide occupies 22-50 (SEDAHKELLKEVVRAMVVDKTDAVQAEER). Disulfide bonds link cysteine 52–cysteine 66, cysteine 59–cysteine 71, and cysteine 65–cysteine 78.

It belongs to the neurotoxin 10 (Hwtx-1) family. 17 (Hntx-9) subfamily. Expressed by the venom gland.

The protein resides in the secreted. Functionally, ion channel inhibitor. This Cyriopagopus hainanus (Chinese bird spider) protein is Omega-theraphotoxin-Hhn1f 3.